The following is a 119-amino-acid chain: Circadian clock oscillator protein KaiB (119 aa).

Belongs to the KaiB family. May undergo a major conformational rearrangment; in the free state forms homooligomers. When bound to KaiC switches to a monomeric thioredoxin-fold (KaiB(fs)). The active oscillator complex is probably KaiC(6):KaiB(6).

Component of the KaiBC clock protein complex, which constitutes the main circadian regulator in cyanobacteria; it may modify the ATPase activity of KaiC. In terms of biological role, may be a metamorphic protein which reversibly switches between an inactive tetrameric fold and a rare, thioredoxin-like monomeric fold (KaiB(fs)). KaiB(fs) binds phospho-KaiC, and perhaps clock output effectors. The protein is Circadian clock oscillator protein KaiB of Prochlorococcus marinus (strain MIT 9303).